A 231-amino-acid chain; its full sequence is ADP-ribose pyrophosphatase (231 aa).

Position 2 is an N-acetylserine (Phe-2). Residues Trp-46, Trp-64–Asp-65, Arg-69, and Arg-103 each bind substrate. Positions Gly-75–Arg-214 constitute a Nudix hydrolase domain. Residue Ala-115 coordinates Mg(2+). Residues Gly-116–Gly-137 carry the Nudix box motif. Position 117 (Leu-117) interacts with substrate. The Mg(2+) site is built by Glu-131 and Glu-135. Residue Asp-152 participates in substrate binding. Glu-185 is a Mg(2+) binding site.

The protein belongs to the Nudix hydrolase family. NudF subfamily. Requires Mg(2+) as cofactor. The cofactor is Mn(2+).

It carries out the reaction ADP-D-ribose + H2O = D-ribose 5-phosphate + AMP + 2 H(+). The protein is ADP-ribose pyrophosphatase (YSA1) of Saccharomyces cerevisiae (strain ATCC 204508 / S288c) (Baker's yeast).